The following is a 143-amino-acid chain: Large ribosomal subunit protein uL15 (143 aa).

Positions 1–56 (MQLNSIKPAAGAKHAKRRVGRGIGSGLGKTAGRGHKGQKSRAGGYHKVGFEGGQMP) are disordered. The segment covering 21–31 (RGIGSGLGKTA) has biased composition (gly residues).

It belongs to the universal ribosomal protein uL15 family. In terms of assembly, part of the 50S ribosomal subunit.

Binds to the 23S rRNA. The polypeptide is Large ribosomal subunit protein uL15 (Verminephrobacter eiseniae (strain EF01-2)).